The chain runs to 248 residues: Ureidoacrylate amidohydrolase RutB (248 aa).

Residue D43 is the Proton acceptor of the active site. The active site involves K152. The Nucleophile role is filled by C185.

It belongs to the isochorismatase family. RutB subfamily.

The catalysed reaction is (Z)-3-ureidoacrylate + H2O + H(+) = (Z)-3-aminoacrylate + NH4(+) + CO2. The enzyme catalyses (Z)-3-ureidoacrylate + H2O = (Z)-3-aminoacrylate + carbamate + H(+). It catalyses the reaction (Z)-2-methylureidoacrylate + H2O + H(+) = (Z)-2-methylaminoacrylate + NH4(+) + CO2. Its function is as follows. Hydrolyzes ureidoacrylate to form aminoacrylate and carbamate. The carbamate hydrolyzes spontaneously, thereby releasing one of the nitrogen atoms of the pyrimidine ring as ammonia and one of its carbon atoms as CO2. The protein is Ureidoacrylate amidohydrolase RutB of Serratia proteamaculans (strain 568).